A 186-amino-acid chain; its full sequence is Large ribosomal subunit protein bL17 (186 aa).

Residues 123–186 (SEADRARRVK…ADEAEGSSED (64 aa)) form a disordered region. Residues 139–177 (EAAAAAPQAAVEPEAVEAAPAPDAPEAAPEAEAAAPQPA) show a composition bias toward low complexity.

This sequence belongs to the bacterial ribosomal protein bL17 family. In terms of assembly, part of the 50S ribosomal subunit. Contacts protein L32.

In Mycobacterium avium (strain 104), this protein is Large ribosomal subunit protein bL17.